We begin with the raw amino-acid sequence, 520 residues long: MELSWETKSAIILITVTFGLVYAWRVLNWMWLKPKKIEKLLREQGLQGNPYRLLLGDAKDYFVMQKKVQSKPMNLSDDIAPRVAPYIHHAVQTHGKKSFIWFGMKPWVILNEPEQIREVFNKMSEFPKVQYKFMKLITRGLVKLEGEKWSKHRRIINPAFHMEKLKIMTPTFLKSCNDLISNWEKMLSSNGSCEMDVWPSLQSLTSDVIARSSFGSSYEEGRKVFQLQIEQGELIMKNLMKSLIPLWRFLPTADHRKINENEKQIETTLKNIINKREKAIKAGEATENDLLGLLLESNHREIKEHGNVKNMGLSLEEVVGECRLFHVAGQETTSDLLVWTMVLLSRYPDWQERARKEVLEIFGNEKPDFDGLNKLKIMAMILYEVLRLYPPVTGVARKVENDIKLGDLTLYAGMEVYMPIVLIHHDCELWGDDAKIFNPERFSGGISKATNGRFSYFPFGAGPRICIGQNFSLLEAKMAMALILKNFSFELSQTYAHAPSVVLSVQPQHGAHVILRKIKT.

Residues 11–31 (IILITVTFGLVYAWRVLNWMW) traverse the membrane as a helical segment. Position 466 (Cys466) interacts with heme.

It belongs to the cytochrome P450 family. Requires heme as cofactor.

The protein resides in the membrane. It carries out the reaction oleanolate + 3 reduced [NADPH--hemoprotein reductase] + 3 O2 = gypsogenate + 3 oxidized [NADPH--hemoprotein reductase] + 4 H2O + 4 H(+). Catalyzes the carboxylation of oleanolic acid at the C-23 position to form gypsogenic acid. Involved in the hemolytic saponin biosynthetic pathway. In Medicago truncatula (Barrel medic), this protein is Cytochrome P450 72A68.